Here is a 227-residue protein sequence, read N- to C-terminus: Probable GTP-binding protein EngB (227 aa).

In terms of domain architecture, EngB-type G spans 41-216 (GRPEVAFAGR…RAEIARFAVP (176 aa)). Residues 49–56 (GRSNVGKS), 76–80 (GRTKQ), 94–97 (DMPG), 161–164 (TKCD), and 195–197 (TSS) contribute to the GTP site. S56 and T78 together coordinate Mg(2+).

This sequence belongs to the TRAFAC class TrmE-Era-EngA-EngB-Septin-like GTPase superfamily. EngB GTPase family. Requires Mg(2+) as cofactor.

Functionally, necessary for normal cell division and for the maintenance of normal septation. The chain is Probable GTP-binding protein EngB from Gluconobacter oxydans (strain 621H) (Gluconobacter suboxydans).